A 318-amino-acid polypeptide reads, in one-letter code: NF-kappa-B inhibitor alpha (318 aa).

The tract at residues 1-44 is disordered; that stretch reads MLSAHRPAEPPAVEGCEPPRKERQGGLLPPDDRHDSGLDSMKEE. Residues 17–44 are compositionally biased toward basic and acidic residues; it reads EPPRKERQGGLLPPDDRHDSGLDSMKEE. Residue K21 forms a Glycyl lysine isopeptide (Lys-Gly) (interchain with G-Cter in ubiquitin) linkage. Position 36 is a phosphoserine; by IKKA and IKKB (S36). Residue S40 is modified to Phosphoserine; by IKKA, IKKB and IKKE. Y46 is modified (phosphotyrosine; by Tyr-kinases). ANK repeat units lie at residues 114-143, 147-176, 186-215, and 220-249; these read LSQTPLHLAVITDQAEIAEHLLKAGCDLDV, RGNTPLHIACQQGSLRSVSVLTQHCQPHHL, NGHTCLHLASIQGYLAVVEYLLSLGADVNA, and NGRTALHLAVDLQNSDLVSLLVKHGPDVNK.

Belongs to the NF-kappa-B inhibitor family. Phosphorylated at Ser-36 and Ser-40 by IKKA/CHUK and IKKB/IKBKB; disables inhibition of NF-kappa-B DNA-binding activity. Phosphorylation at positions 36 and 40 is prerequisite to polyubiquitination and subsequent degradation. Post-translationally, monoubiquitinated at Lys-21 following phosphorylation at Ser-36 and Ser-40. The resulting polyubiquitination leads to protein degradation. In terms of processing, hydroxylated by HIF1AN. Highly expressed in lymph node, thymus followed by liver, brain, muscle, kidney, gastrointestinal and reproductive tract.

Its subcellular location is the cytoplasm. The protein localises to the nucleus. Inhibits the activity of dimeric NF-kappa-B/REL complexes by trapping REL (RELA/p65 and NFKB1/p50) dimers in the cytoplasm by masking their nuclear localization signals. On cellular stimulation by immune and pro-inflammatory responses, becomes phosphorylated promoting ubiquitination and degradation, enabling the dimeric RELA to translocate to the nucleus and activate transcription. The sequence is that of NF-kappa-B inhibitor alpha (NFKBIA) from Gallus gallus (Chicken).